The sequence spans 185 residues: Peptidyl-tRNA hydrolase (185 aa).

Residue tyrosine 14 participates in tRNA binding. The active-site Proton acceptor is the histidine 19. The tRNA site is built by phenylalanine 63, asparagine 65, and asparagine 111.

The protein belongs to the PTH family. As to quaternary structure, monomer.

The protein localises to the cytoplasm. It carries out the reaction an N-acyl-L-alpha-aminoacyl-tRNA + H2O = an N-acyl-L-amino acid + a tRNA + H(+). In terms of biological role, hydrolyzes ribosome-free peptidyl-tRNAs (with 1 or more amino acids incorporated), which drop off the ribosome during protein synthesis, or as a result of ribosome stalling. Its function is as follows. Catalyzes the release of premature peptidyl moieties from peptidyl-tRNA molecules trapped in stalled 50S ribosomal subunits, and thus maintains levels of free tRNAs and 50S ribosomes. The protein is Peptidyl-tRNA hydrolase of Desulfitobacterium hafniense (strain Y51).